The sequence spans 596 residues: Elongation factor 4 (596 aa).

The tr-type G domain maps to 2–184 (KQIRNFSIIA…VIVAKIPPPE (183 aa)). GTP-binding positions include 14–19 (DHGKST) and 131–134 (NKID).

Belongs to the TRAFAC class translation factor GTPase superfamily. Classic translation factor GTPase family. LepA subfamily.

The protein resides in the cell inner membrane. It carries out the reaction GTP + H2O = GDP + phosphate + H(+). Its function is as follows. Required for accurate and efficient protein synthesis under certain stress conditions. May act as a fidelity factor of the translation reaction, by catalyzing a one-codon backward translocation of tRNAs on improperly translocated ribosomes. Back-translocation proceeds from a post-translocation (POST) complex to a pre-translocation (PRE) complex, thus giving elongation factor G a second chance to translocate the tRNAs correctly. Binds to ribosomes in a GTP-dependent manner. In Shewanella baltica (strain OS155 / ATCC BAA-1091), this protein is Elongation factor 4.